A 360-amino-acid polypeptide reads, in one-letter code: Probable neutral protease 2 homolog A (360 aa).

An N-terminal signal peptide occupies residues 1 to 17 (MQFTALLAALGAPLALA). Residues 18-183 (ASIPAAAHNH…DDSTGVIDKR (166 aa)) constitute a propeptide that is removed on maturation. Intrachain disulfides connect cysteine 191–cysteine 262, cysteine 269–cysteine 287, and cysteine 300–cysteine 360. The N-linked (GlcNAc...) asparagine glycan is linked to asparagine 205. Histidine 311 is a Zn(2+) binding site. Residue glutamate 312 is part of the active site. Residues histidine 315 and aspartate 326 each contribute to the Zn(2+) site.

It belongs to the peptidase M35 family. It depends on Zn(2+) as a cofactor.

It is found in the secreted. It carries out the reaction Preferential cleavage of bonds with hydrophobic residues in P1'. Also 3-Asn-|-Gln-4 and 8-Gly-|-Ser-9 bonds in insulin B chain.. Functionally, probable secreted metalloprotease that shows high activities on basic nuclear substrates such as histone and protamine. May be involved in virulence. The protein is Probable neutral protease 2 homolog A (NpII-A) of Trichophyton rubrum (Athlete's foot fungus).